A 474-amino-acid chain; its full sequence is ATP synthase subunit beta (474 aa).

151-158 (GGAGVGKT) is an ATP binding site.

It belongs to the ATPase alpha/beta chains family. As to quaternary structure, F-type ATPases have 2 components, CF(1) - the catalytic core - and CF(0) - the membrane proton channel. CF(1) has five subunits: alpha(3), beta(3), gamma(1), delta(1), epsilon(1). CF(0) has four main subunits: a(1), b(1), b'(1) and c(9-12).

The protein localises to the cell inner membrane. The enzyme catalyses ATP + H2O + 4 H(+)(in) = ADP + phosphate + 5 H(+)(out). Functionally, produces ATP from ADP in the presence of a proton gradient across the membrane. The catalytic sites are hosted primarily by the beta subunits. The sequence is that of ATP synthase subunit beta from Jannaschia sp. (strain CCS1).